A 249-amino-acid polypeptide reads, in one-letter code: Triosephosphate isomerase (249 aa).

9–11 (NWK) contacts substrate. Histidine 94 serves as the catalytic Electrophile. Catalysis depends on glutamate 166, which acts as the Proton acceptor. Substrate is bound by residues glycine 172, serine 211, and 232 to 233 (GG).

It belongs to the triosephosphate isomerase family. In terms of assembly, homodimer.

It is found in the cytoplasm. The catalysed reaction is D-glyceraldehyde 3-phosphate = dihydroxyacetone phosphate. It functions in the pathway carbohydrate biosynthesis; gluconeogenesis. It participates in carbohydrate degradation; glycolysis; D-glyceraldehyde 3-phosphate from glycerone phosphate: step 1/1. In terms of biological role, involved in the gluconeogenesis. Catalyzes stereospecifically the conversion of dihydroxyacetone phosphate (DHAP) to D-glyceraldehyde-3-phosphate (G3P). This is Triosephosphate isomerase from Dechloromonas aromatica (strain RCB).